Reading from the N-terminus, the 202-residue chain is Small ribosomal subunit protein uS4 (202 aa).

Residues 22–43 form a disordered region; the sequence is TRKSARRAYPPGQHGQNRKKRS. The S4 RNA-binding domain maps to 90 to 152; that stretch reads MRLDNTVFRL…APSRKLVENN (63 aa).

It belongs to the universal ribosomal protein uS4 family. As to quaternary structure, part of the 30S ribosomal subunit. Contacts protein S5. The interaction surface between S4 and S5 is involved in control of translational fidelity.

Its function is as follows. One of the primary rRNA binding proteins, it binds directly to 16S rRNA where it nucleates assembly of the body of the 30S subunit. Functionally, with S5 and S12 plays an important role in translational accuracy. This chain is Small ribosomal subunit protein uS4, found in Trichormus variabilis (strain ATCC 29413 / PCC 7937) (Anabaena variabilis).